Reading from the N-terminus, the 268-residue chain is Trans-aconitate 2-methyltransferase (268 aa).

This sequence belongs to the methyltransferase superfamily. Tam family.

The protein resides in the cytoplasm. It carries out the reaction trans-aconitate + S-adenosyl-L-methionine = (E)-3-(methoxycarbonyl)pent-2-enedioate + S-adenosyl-L-homocysteine. Functionally, catalyzes the S-adenosylmethionine monomethyl esterification of trans-aconitate. The chain is Trans-aconitate 2-methyltransferase from Delftia acidovorans (strain DSM 14801 / SPH-1).